A 501-amino-acid chain; its full sequence is Postreplication repair E3 ubiquitin-protein ligase rad18 (501 aa).

Residues 34–72 (CHVCKDFYDSPMLTSCNHTFCSLCIRRCLSVDSKCPLCR) form an RING-type zinc finger. Residues 111–154 (QAILPDQAGPSSPSKRKATEMEGPKEEDPESKRPRRSTRSTRAR) form a disordered region. The segment covering 127 to 142 (KATEMEGPKEEDPESK) has biased composition (basic and acidic residues). The segment covering 143 to 152 (RPRRSTRSTR) has biased composition (basic residues). A UBZ4-type zinc finger spans residues 186 to 214 (LVACPICLTRMKEQQVDRHLDTSCPGSPQ). Zn(2+) is bound by residues Cys-189, Cys-192, His-204, and Cys-209. Residues 203–250 (RHLDTSCPGSPQAASKRRPIPAQTPQPSTFPSFNTRLTSQTNQKPPER) are disordered. Positions 225–246 (QTPQPSTFPSFNTRLTSQTNQK) are enriched in polar residues. The 35-residue stretch at 256-290 (YSMLRDTALRKKLSELGLSTHGSRQLLEKRHKEWI) folds into the SAP domain. A disordered region spans residues 377-501 (IKRQTLDGNG…GMKKPNPETC (125 aa)).

Belongs to the RAD18 family. In terms of assembly, interacts with E2 mus-8/ubc2, forming a complex with ubiquitin ligase activity.

The protein resides in the nucleus. It catalyses the reaction S-ubiquitinyl-[E2 ubiquitin-conjugating enzyme]-L-cysteine + [acceptor protein]-L-lysine = [E2 ubiquitin-conjugating enzyme]-L-cysteine + N(6)-ubiquitinyl-[acceptor protein]-L-lysine.. The protein operates within protein modification; protein ubiquitination. In terms of biological role, E3 RING-finger protein, member of the UBC2/RAD6 epistasis group. Associates to the E2 ubiquitin conjugating enzyme mus-8/ubc2 to form the mus-8/ubc2-uvs-2/rad18 ubiquitin ligase complex involved in postreplicative repair (PRR) of damaged DNA. The sequence is that of Postreplication repair E3 ubiquitin-protein ligase rad18 (uvs-2) from Neurospora crassa (strain ATCC 24698 / 74-OR23-1A / CBS 708.71 / DSM 1257 / FGSC 987).